A 450-amino-acid polypeptide reads, in one-letter code: Tubulin alpha-6 chain (450 aa).

Gln11, Glu71, Gly144, Thr145, Thr179, Asn206, and Asn228 together coordinate GTP. Mg(2+) is bound at residue Glu71. Glu254 is an active-site residue. Position 349 is a phosphothreonine (Thr349). The disordered stretch occupies residues 430 to 450; the sequence is KDYEEVGAEGGDDEDDEGEEY. Acidic residues predominate over residues 431-450; the sequence is DYEEVGAEGGDDEDDEGEEY.

Belongs to the tubulin family. As to quaternary structure, dimer of alpha and beta chains. A typical microtubule is a hollow water-filled tube with an outer diameter of 25 nm and an inner diameter of 15 nM. Alpha-beta heterodimers associate head-to-tail to form protofilaments running lengthwise along the microtubule wall with the beta-tubulin subunit facing the microtubule plus end conferring a structural polarity. Microtubules usually have 13 protofilaments but different protofilament numbers can be found in some organisms and specialized cells. Interacts with TFCB. Mg(2+) is required as a cofactor. In terms of processing, undergoes a tyrosination/detyrosination cycle, the cyclic removal and re-addition of a C-terminal tyrosine residue by the enzymes tubulin tyrosine carboxypeptidase (TTCP) and tubulin tyrosine ligase (TTL), respectively. Post-translationally, acetylation of alpha chains at Lys-40 stabilizes microtubules and affects affinity and processivity of microtubule motors. This modification has a role in multiple cellular functions, ranging from cell motility, cell cycle progression or cell differentiation to intracellular trafficking and signaling.

It is found in the cytoplasm. The protein localises to the cytoskeleton. It carries out the reaction GTP + H2O = GDP + phosphate + H(+). In terms of biological role, tubulin is the major constituent of microtubules, a cylinder consisting of laterally associated linear protofilaments composed of alpha- and beta-tubulin heterodimers. Microtubules grow by the addition of GTP-tubulin dimers to the microtubule end, where a stabilizing cap forms. Below the cap, tubulin dimers are in GDP-bound state, owing to GTPase activity of alpha-tubulin. The protein is Tubulin alpha-6 chain (TUBA6) of Arabidopsis thaliana (Mouse-ear cress).